Reading from the N-terminus, the 114-residue chain is Ribosome-binding factor A (114 aa).

It belongs to the RbfA family. In terms of assembly, monomer. Binds 30S ribosomal subunits, but not 50S ribosomal subunits or 70S ribosomes.

The protein resides in the cytoplasm. One of several proteins that assist in the late maturation steps of the functional core of the 30S ribosomal subunit. Associates with free 30S ribosomal subunits (but not with 30S subunits that are part of 70S ribosomes or polysomes). Required for efficient processing of 16S rRNA. May interact with the 5'-terminal helix region of 16S rRNA. The chain is Ribosome-binding factor A from Phytoplasma mali (strain AT).